A 204-amino-acid polypeptide reads, in one-letter code: Large ribosomal subunit protein uL4 (204 aa).

The tract at residues 52 to 76 (AEVRGGGKKPWAQKGGGRARAGSRR) is disordered.

This sequence belongs to the universal ribosomal protein uL4 family. As to quaternary structure, part of the 50S ribosomal subunit.

Its function is as follows. One of the primary rRNA binding proteins, this protein initially binds near the 5'-end of the 23S rRNA. It is important during the early stages of 50S assembly. It makes multiple contacts with different domains of the 23S rRNA in the assembled 50S subunit and ribosome. Forms part of the polypeptide exit tunnel. The sequence is that of Large ribosomal subunit protein uL4 from Sulfurimonas denitrificans (strain ATCC 33889 / DSM 1251) (Thiomicrospira denitrificans (strain ATCC 33889 / DSM 1251)).